A 258-amino-acid polypeptide reads, in one-letter code: tRNA pseudouridine synthase A (258 aa).

The Nucleophile role is filled by aspartate 52. Substrate is bound at residue tyrosine 110.

Belongs to the tRNA pseudouridine synthase TruA family. Homodimer.

The catalysed reaction is uridine(38/39/40) in tRNA = pseudouridine(38/39/40) in tRNA. Functionally, formation of pseudouridine at positions 38, 39 and 40 in the anticodon stem and loop of transfer RNAs. The polypeptide is tRNA pseudouridine synthase A (Francisella tularensis subsp. holarctica (strain LVS)).